The sequence spans 230 residues: Movement and silencing protein TGBp1 (230 aa).

The (+)RNA virus helicase ATP-binding domain occupies 1 to 114 (MDSIINALTS…GLALRPHFIK (114 aa)). Positions 115–230 (SVSHRLCPAT…VRSPPPHPSH (116 aa)) constitute a (+)RNA virus helicase C-terminal domain.

It belongs to the Tymovirales TGBp1 protein family. As to quaternary structure, homodimer and homooligomer. Interacts with capsid protein. Interacts with host AGO1; this interaction targets the host protein for degradation, thereby suppressing the antiviral RNA silencing.

It is found in the host cytoplasm. Functionally, transports viral genome to neighboring plant cells directly through plasmosdesmata, without any budding. The movement protein allows efficient cell to cell propagation, by bypassing the host cell wall barrier. Increases plasmodesma size exclusion limit. Acts as a suppressor of RNA-mediated gene silencing, also known as post-transcriptional gene silencing (PTGS), a mechanism of plant viral defense that limits the accumulation of viral RNAs. The sequence is that of Movement and silencing protein TGBp1 from Plantago asiatica (P1AMV).